The sequence spans 340 residues: Uroporphyrinogen decarboxylase (340 aa).

Substrate contacts are provided by residues 21–25 (RQAGR), aspartate 71, tyrosine 147, serine 202, and histidine 316.

This sequence belongs to the uroporphyrinogen decarboxylase family. Homodimer.

The protein localises to the cytoplasm. The catalysed reaction is uroporphyrinogen III + 4 H(+) = coproporphyrinogen III + 4 CO2. It participates in porphyrin-containing compound metabolism; protoporphyrin-IX biosynthesis; coproporphyrinogen-III from 5-aminolevulinate: step 4/4. In terms of biological role, catalyzes the decarboxylation of four acetate groups of uroporphyrinogen-III to yield coproporphyrinogen-III. The polypeptide is Uroporphyrinogen decarboxylase (Nitratiruptor sp. (strain SB155-2)).